Here is an 82-residue protein sequence, read N- to C-terminus: Small ribosomal subunit protein bS16 (82 aa).

Belongs to the bacterial ribosomal protein bS16 family.

This chain is Small ribosomal subunit protein bS16, found in Deinococcus geothermalis (strain DSM 11300 / CIP 105573 / AG-3a).